The primary structure comprises 474 residues: MSNHVNGVNGVNGVNGVKPVFPENAASKEYAKALDAADPLASFRDKFIIPSKANIQSKRLAKPNISADPCIYFCGNSLGLQPKATAKYMEAHLDTWASIGVNGHFTKIEDSPLDPWWVMAEQAAGSMSKLVGAAPEEVIAMGTLTSNLHLLLASFYKPTATKHKILLDWKAFPSDHYAIESHIAWHDGLDPKKSMVLIGPDEGEYEIPTQKILSIIDEHADEAALILLPGIQYYTGQYFDINTITEYAHSKGLMVGWDLAHAFANVELKLHEWDVDFAVWCTYKYANAGPGSMGGLFVHEKHGKVDYSQGEDSPQFRHRLAGWYGGDRSVRFKMDNKFRPIPGAGGFQLSTSSATDLTCLNASLSIFDQTSISELRRKSVQLTAYLEYLLLKDTTDETRPFRIITPSNPEERGAQLSLLLKPGLLQRVADKLQSASIVCDKREPGVVRVAPAPLYNTYSEVWQFVEQLKAAFQE.

Residues leucine 144, threonine 145, 172–175, aspartate 258, histidine 261, and tyrosine 283 each bind pyridoxal 5'-phosphate; that span reads FPSD. Lysine 284 bears the N6-(pyridoxal phosphate)lysine mark. 2 residues coordinate pyridoxal 5'-phosphate: tryptophan 323 and threonine 351.

It belongs to the kynureninase family. Homodimer. Pyridoxal 5'-phosphate is required as a cofactor.

The protein resides in the cytoplasm. It catalyses the reaction L-kynurenine + H2O = anthranilate + L-alanine + H(+). The enzyme catalyses 3-hydroxy-L-kynurenine + H2O = 3-hydroxyanthranilate + L-alanine + H(+). It participates in amino-acid degradation; L-kynurenine degradation; L-alanine and anthranilate from L-kynurenine: step 1/1. The protein operates within cofactor biosynthesis; NAD(+) biosynthesis; quinolinate from L-kynurenine: step 2/3. Its function is as follows. Catalyzes the cleavage of L-kynurenine (L-Kyn) and L-3-hydroxykynurenine (L-3OHKyn) into anthranilic acid (AA) and 3-hydroxyanthranilic acid (3-OHAA), respectively. The polypeptide is Kynureninase 2 (bna5-2) (Emericella nidulans (strain FGSC A4 / ATCC 38163 / CBS 112.46 / NRRL 194 / M139) (Aspergillus nidulans)).